Consider the following 953-residue polypeptide: Coatomer subunit beta-1 (953 aa).

HEAT repeat units lie at residues 49–87 (ETLP…RDVA), 93–127 (PEMI…LNEP), 128–165 (ELLE…LPHG), 314–351 (DVMV…PRNV), and 393–430 (EVAG…TNPK).

Oligomeric complex that consists of at least the alpha, beta, beta', gamma, delta, epsilon and zeta subunits.

The protein localises to the cytoplasm. Its subcellular location is the golgi apparatus membrane. The protein resides in the cytoplasmic vesicle. It is found in the COPI-coated vesicle membrane. In terms of biological role, the coatomer is a cytosolic protein complex that binds to dilysine motifs and reversibly associates with Golgi non-clathrin-coated vesicles, which further mediate biosynthetic protein transport from the ER, via the Golgi up to the trans Golgi network. Coatomer complex is required for budding from Golgi membranes, and is essential for the retrograde Golgi-to-ER transport of dilysine-tagged proteins. The protein is Coatomer subunit beta-1 of Oryza sativa subsp. japonica (Rice).